Consider the following 311-residue polypeptide: Protease HtpX homolog 1 (311 aa).

Helical transmembrane passes span 12-32 and 35-55; these read VISL…IASL and ISLF…WIIS. H137 serves as a coordination point for Zn(2+). Residue E138 is part of the active site. H141 provides a ligand contact to Zn(2+). The next 2 membrane-spanning stretches (helical) occupy residues 159–179 and 184–204; these read VLGY…FLAA and LLFA…TFIL. E216 provides a ligand contact to Zn(2+).

The protein belongs to the peptidase M48B family. The cofactor is Zn(2+).

Its subcellular location is the cell membrane. The chain is Protease HtpX homolog 1 from Saccharolobus solfataricus (strain ATCC 35092 / DSM 1617 / JCM 11322 / P2) (Sulfolobus solfataricus).